Consider the following 609-residue polypeptide: Thiamine metabolism regulatory protein THI3 (609 aa).

Residues 578–598 (SKQVQEENENSSAVNTPTPEF) form a disordered region.

It belongs to the TPP enzyme family. The cofactor is Mg(2+). It depends on thiamine diphosphate as a cofactor.

Its subcellular location is the nucleus. It carries out the reaction 4-methyl-2-oxopentanoate + H(+) = 3-methylbutanal + CO2. The enzyme catalyses (S)-3-methyl-2-oxopentanoate + H(+) = 2-methylbutanal + CO2. It functions in the pathway amino-acid degradation; Ehrlich pathway. Its function is as follows. One of five 2-oxo acid decarboxylases (PDC1, PDC5, PDC6, ARO10, and THI3) involved in amino acid catabolism. The enzyme catalyzes the decarboxylation of amino acids, which, in a first step, have been transaminated to the corresponding 2-oxo acids (alpha-keto-acids). In a third step, the resulting aldehydes are reduced to alcohols, collectively referred to as fusel oils or alcohols. Its preferred substrates are the transaminated amino acids derived from leucine (4-methyl-2-oxopentanoate, also alpha-keto-isocaproate) and isoleucine ((3S)-3-methyl-2-oxopentanoate, also alpha-keto-beta-methylvalerate), whereas transaminated valine, transaminated aromatic amino acids, and pyruvate are no substrates. In analogy to the pyruvate decarboxylases the enzyme may in a side-reaction catalyze condensation (or carboligation) reactions leading to the formation of 2-hydroxy ketone, collectively called acyloins. The enzyme is also positively regulating the thiamine metabolism by a molecular mechanism that may involve thiamine concentration sensing and signal transmission. The polypeptide is Thiamine metabolism regulatory protein THI3 (THI3) (Saccharomyces cerevisiae (strain ATCC 204508 / S288c) (Baker's yeast)).